We begin with the raw amino-acid sequence, 344 residues long: S-adenosylmethionine:tRNA ribosyltransferase-isomerase (344 aa).

It belongs to the QueA family. In terms of assembly, monomer.

The protein resides in the cytoplasm. It carries out the reaction 7-aminomethyl-7-carbaguanosine(34) in tRNA + S-adenosyl-L-methionine = epoxyqueuosine(34) in tRNA + adenine + L-methionine + 2 H(+). Its pathway is tRNA modification; tRNA-queuosine biosynthesis. Functionally, transfers and isomerizes the ribose moiety from AdoMet to the 7-aminomethyl group of 7-deazaguanine (preQ1-tRNA) to give epoxyqueuosine (oQ-tRNA). The protein is S-adenosylmethionine:tRNA ribosyltransferase-isomerase of Pediococcus pentosaceus (strain ATCC 25745 / CCUG 21536 / LMG 10740 / 183-1w).